Consider the following 58-residue polypeptide: Microcin J25 (58 aa).

Positions 1–37 (MIKHFHFNKLSSGKKNNVPSPAKGVIQIKKSASQLTK) are excised as a propeptide. The segment at residues 38 to 45 (GGAGHVPE) is a cross-link (isoglutamyl glycine isopeptide (Gly-Glu)).

It is found in the secreted. Functionally, peptide antibiotic that functions through inhibition of the bacterial DNA-dependent RNA polymerase (RNAP). Inhibits transcription by binding deep within RNAP secondary channel, where it sterically blocks the folding of the trigger loop, which is essential for efficient catalysis. In addition, it also seems to restrict access of nucleotide substrates to the catalytic center, and shows a partially competitive mode of inhibition with them. Exhibits potent bacteriocidal activity against a range of Enterobacteriaceae, including several pathogenic E.coli, Salmonella and Shigella strains. Also acts on the cytoplasmic membrane of Salmonella newport, producing alteration of membrane permeability and disruption of the subsequent gradient dissipation, which inhibits several processes essential for cell viability, such as oxygen consumption. Induces bacterial filamentation in susceptible cells in a non-SOS-dependent way, but this phenotype may result from impaired transcription of genes coding for cell division proteins. This Escherichia coli protein is Microcin J25 (mcjA).